A 571-amino-acid polypeptide reads, in one-letter code: Proline--tRNA ligase (571 aa).

It belongs to the class-II aminoacyl-tRNA synthetase family. ProS type 1 subfamily. As to quaternary structure, homodimer.

Its subcellular location is the cytoplasm. It carries out the reaction tRNA(Pro) + L-proline + ATP = L-prolyl-tRNA(Pro) + AMP + diphosphate. Functionally, catalyzes the attachment of proline to tRNA(Pro) in a two-step reaction: proline is first activated by ATP to form Pro-AMP and then transferred to the acceptor end of tRNA(Pro). As ProRS can inadvertently accommodate and process non-cognate amino acids such as alanine and cysteine, to avoid such errors it has two additional distinct editing activities against alanine. One activity is designated as 'pretransfer' editing and involves the tRNA(Pro)-independent hydrolysis of activated Ala-AMP. The other activity is designated 'posttransfer' editing and involves deacylation of mischarged Ala-tRNA(Pro). The misacylated Cys-tRNA(Pro) is not edited by ProRS. The chain is Proline--tRNA ligase from Shewanella putrefaciens (strain CN-32 / ATCC BAA-453).